A 325-amino-acid chain; its full sequence is 5-dehydro-2-deoxygluconokinase (325 aa).

It belongs to the carbohydrate kinase PfkB family.

The catalysed reaction is 5-dehydro-2-deoxy-D-gluconate + ATP = 6-phospho-5-dehydro-2-deoxy-D-gluconate + ADP + H(+). Its pathway is polyol metabolism; myo-inositol degradation into acetyl-CoA; acetyl-CoA from myo-inositol: step 5/7. Catalyzes the phosphorylation of 5-dehydro-2-deoxy-D-gluconate (2-deoxy-5-keto-D-gluconate or DKG) to 6-phospho-5-dehydro-2-deoxy-D-gluconate (DKGP). The sequence is that of 5-dehydro-2-deoxygluconokinase from Bacillus licheniformis (strain ATCC 14580 / DSM 13 / JCM 2505 / CCUG 7422 / NBRC 12200 / NCIMB 9375 / NCTC 10341 / NRRL NRS-1264 / Gibson 46).